The primary structure comprises 644 residues: Zinc finger protein 74 (644 aa).

Positions 43–114 constitute a KRAB domain; that stretch reads VSFKDVAVDF…QREVPRGPCP (72 aa). 12 consecutive C2H2-type zinc fingers follow at residues 248-270, 276-298, 304-326, 332-354, 360-382, 388-410, 416-438, 444-466, 472-494, 500-522, 528-550, and 556-578; these read FVCGECGKAFRQSSSLTLHRRWH, YKCDECGKAFTWSTNLLEHRRIH, FFCGECGKAFSCHSSLNVHQRIH, YKCSACEKAFSCSSLLSMHLRVH, YRCGECGKAFNQRTHLTRHHRIH, YQCGSCGKAFTCHSSLTVHEKIH, FKCSDCEKAFNSRSRLTLHQRTH, FKCADCGKGFSCHAYLLVHRRIH, FKCNECGKAFSSHAYLIVHRRIH, FDCSQCWKAFSCHSSLIVHQRIH, YKCSECGRAFSQNHCLIKHQKIH, and FKCEKCGEMFNWSSHLTEHQRLH. K582 participates in a covalent cross-link: Glycyl lysine isopeptide (Lys-Gly) (interchain with G-Cter in SUMO2).

This sequence belongs to the krueppel C2H2-type zinc-finger protein family. Highly expressed in the fetal brain.

The protein localises to the nucleus. Its function is as follows. May play a role in RNA metabolism. This is Zinc finger protein 74 (ZNF74) from Homo sapiens (Human).